A 1130-amino-acid chain; its full sequence is Putative beta-hexosaminidase (1130 aa).

A signal peptide spans 1-23 (MKWVKSGVGILGILLIICHAVTS). Low complexity-rich tracts occupy residues 1001–1030 (PGQMRALGQQAGQALRGQGQQTGQQTLPAQ) and 1037–1072 (LTGQAAGTGVAGQSGQQPSAAGQGTQQGLPGQQRTG). Disordered stretches follow at residues 1001 to 1075 (PGQM…GVVP) and 1102 to 1130 (QMRGQGQIPQTQGAVAGAGQSRVPQQQAG).

Belongs to the glycosyl hydrolase 20 family. In terms of tissue distribution, prismatic layer of shell (at protein level). Expressed primarily in the mantle with highest level in the mantle edge and lower level in the mantle pallium.

Its subcellular location is the secreted. The catalysed reaction is Hydrolysis of terminal non-reducing N-acetyl-D-hexosamine residues in N-acetyl-beta-D-hexosaminides.. It participates in glycan degradation; chitin degradation. The chain is Putative beta-hexosaminidase from Pinctada maxima (Silver-lipped pearl oyster).